The sequence spans 225 residues: Uracil-DNA glycosylase (225 aa).

The active-site Proton acceptor is aspartate 65.

It belongs to the uracil-DNA glycosylase (UDG) superfamily. UNG family.

Its subcellular location is the cytoplasm. The catalysed reaction is Hydrolyzes single-stranded DNA or mismatched double-stranded DNA and polynucleotides, releasing free uracil.. Functionally, excises uracil residues from the DNA which can arise as a result of misincorporation of dUMP residues by DNA polymerase or due to deamination of cytosine. The protein is Uracil-DNA glycosylase of Bacillus cereus (strain AH820).